Here is a 112-residue protein sequence, read N- to C-terminus: Nucleoid-associated protein FTM_1023 (112 aa).

This sequence belongs to the YbaB/EbfC family. Homodimer.

The protein localises to the cytoplasm. It localises to the nucleoid. Functionally, binds to DNA and alters its conformation. May be involved in regulation of gene expression, nucleoid organization and DNA protection. The sequence is that of Nucleoid-associated protein FTM_1023 from Francisella tularensis subsp. mediasiatica (strain FSC147).